A 236-amino-acid chain; its full sequence is MDITRPIIALDLPSAEAALDFVGRFDGENLFVKVGMELFYAAGPSVVTSLKEAGHDVFCDLKLHDIPNTVKGAASSLSRLGADLLTVHAAGGRSMMEASLEGLGDAAETTRVIAITQLTSTSPEALKTEQLVDVPLVESVRNYAKLAQAAGLAGVVCSAHEAADIASVTGPNFLRVTPGIRPAGSAVGDQSRVATPGNAASMGSSAIVVGRPITKADDPVAAYHAIRDDWNAGRKA.

Residues D11, K33, 60–69 (DLKLHDIPNT), T119, R181, Q190, G210, and R211 each bind substrate. K62 (proton donor) is an active-site residue.

The protein belongs to the OMP decarboxylase family. Type 1 subfamily. Homodimer.

It carries out the reaction orotidine 5'-phosphate + H(+) = UMP + CO2. It functions in the pathway pyrimidine metabolism; UMP biosynthesis via de novo pathway; UMP from orotate: step 2/2. Functionally, catalyzes the decarboxylation of orotidine 5'-monophosphate (OMP) to uridine 5'-monophosphate (UMP). This chain is Orotidine 5'-phosphate decarboxylase, found in Cutibacterium acnes (strain DSM 16379 / KPA171202) (Propionibacterium acnes).